A 147-amino-acid chain; its full sequence is Orcokinin peptides (147 aa).

An N-terminal signal peptide occupies residues 1–27 (MPRHSVFALSILALSITATVWIPTVQA). 2 consecutive propeptides follow at residues 28 to 89 (ETNL…ERFG) and 146 to 147 (FG).

This sequence belongs to the orcokinin family.

Its subcellular location is the secreted. Its function is as follows. Myotropic peptides. In Apis mellifera (Honeybee), this protein is Orcokinin peptides.